The chain runs to 209 residues: Large ribosomal subunit protein uL3 (209 aa).

Residue glutamine 150 is modified to N5-methylglutamine.

The protein belongs to the universal ribosomal protein uL3 family. In terms of assembly, part of the 50S ribosomal subunit. Forms a cluster with proteins L14 and L19. Post-translationally, methylated by PrmB.

Its function is as follows. One of the primary rRNA binding proteins, it binds directly near the 3'-end of the 23S rRNA, where it nucleates assembly of the 50S subunit. The chain is Large ribosomal subunit protein uL3 from Salmonella arizonae (strain ATCC BAA-731 / CDC346-86 / RSK2980).